We begin with the raw amino-acid sequence, 488 residues long: Elongation factor Tu, chloroplastic (488 aa).

The tract at residues 1 to 20 is disordered; it reads MALSSTAATTSSKLKLSNPP. Residues 1-79 constitute a chloroplast transit peptide; the sequence is MALSSTAATT…RPSSSPFTVR (79 aa). One can recognise a tr-type G domain in the interval 89 to 293; it reads KPHLNIGTIG…EVDKYIPIPQ (205 aa). The G1 stretch occupies residues 98–105; sequence GHVDHGKT. A GTP-binding site is contributed by 98–105; it reads GHVDHGKT. The interval 139–143 is G2; the sequence is GITIN. The interval 160–163 is G3; it reads DCPG. GTP-binding positions include 160-164 and 215-218; these read DCPGH and NKQD. Positions 215 to 218 are G4; that stretch reads NKQD. The tract at residues 253-255 is G5; the sequence is SAL.

Belongs to the TRAFAC class translation factor GTPase superfamily. Classic translation factor GTPase family. EF-Tu/EF-1A subfamily. Higher expression in leaves than in roots.

It localises to the plastid. It is found in the chloroplast. In terms of biological role, this protein promotes the GTP-dependent binding of aminoacyl-tRNA to the A-site of ribosomes during protein biosynthesis. The protein is Elongation factor Tu, chloroplastic (tufA) of Pisum sativum (Garden pea).